Consider the following 444-residue polypeptide: Transmembrane protein with metallophosphoesterase domain (444 aa).

A run of 5 helical transmembrane segments spans residues 7–27, 43–63, 87–107, 114–134, and 162–182; these read LSLG…MIVS, LFRL…SIYI, MVVA…IFLV, FSLV…FLCV, and LALR…VGLL. Positions 214, 216, 246, 277, 382, and 384 each coordinate a divalent metal cation.

This sequence belongs to the metallophosphoesterase superfamily. LOC643853 family. A divalent metal cation serves as cofactor.

The protein resides in the membrane. The sequence is that of Transmembrane protein with metallophosphoesterase domain (TMPPE) from Bos taurus (Bovine).